A 123-amino-acid chain; its full sequence is Periplasmic [Fe] hydrogenase small subunit (123 aa).

The tat-type signal signal peptide spans methionine 1–alanine 34. The interval threonine 103–glutamate 123 is disordered.

In terms of assembly, heterodimer of a large and a small subunit. In terms of processing, predicted to be exported by the Tat system. The position of the signal peptide cleavage has been experimentally proven.

It localises to the periplasm. It carries out the reaction H2 + 2 oxidized [2Fe-2S]-[ferredoxin] = 2 reduced [2Fe-2S]-[ferredoxin] + 2 H(+). May be involved in hydrogen uptake for the reduction of sulfate to hydrogen sulfide in an electron transport chain. Cytochrome c3 is likely to be the physiological electron carrier for the enzyme. The polypeptide is Periplasmic [Fe] hydrogenase small subunit (hydB) (Nitratidesulfovibrio vulgaris (strain ATCC 29579 / DSM 644 / CCUG 34227 / NCIMB 8303 / VKM B-1760 / Hildenborough) (Desulfovibrio vulgaris)).